The sequence spans 193 residues: Peptidyl-tRNA hydrolase (193 aa).

Y16 contacts tRNA. H21 acts as the Proton acceptor in catalysis. The tRNA site is built by F67, N69, and N115.

This sequence belongs to the PTH family. As to quaternary structure, monomer.

The protein localises to the cytoplasm. It catalyses the reaction an N-acyl-L-alpha-aminoacyl-tRNA + H2O = an N-acyl-L-amino acid + a tRNA + H(+). In terms of biological role, hydrolyzes ribosome-free peptidyl-tRNAs (with 1 or more amino acids incorporated), which drop off the ribosome during protein synthesis, or as a result of ribosome stalling. Catalyzes the release of premature peptidyl moieties from peptidyl-tRNA molecules trapped in stalled 50S ribosomal subunits, and thus maintains levels of free tRNAs and 50S ribosomes. This chain is Peptidyl-tRNA hydrolase, found in Baumannia cicadellinicola subsp. Homalodisca coagulata.